The primary structure comprises 254 residues: Nickel import ATP-binding protein NikD (254 aa).

In terms of domain architecture, ABC transporter spans 2 to 241 (PQQIELRNIT…PKHTVTRSLV (240 aa)). Position 36-43 (36-43 (GGSGSGKS)) interacts with ATP.

This sequence belongs to the ABC transporter superfamily. Nickel importer (TC 3.A.1.5.3) family. The complex is composed of two ATP-binding proteins (NikD and NikE), two transmembrane proteins (NikB and NikC) and a solute-binding protein (NikA).

It is found in the cell inner membrane. The catalysed reaction is Ni(2+)(out) + ATP + H2O = Ni(2+)(in) + ADP + phosphate + H(+). In terms of biological role, part of the ABC transporter complex NikABCDE involved in nickel import. Responsible for energy coupling to the transport system. The polypeptide is Nickel import ATP-binding protein NikD (Shigella flexneri).